The following is a 624-amino-acid chain: 1-deoxy-D-xylulose-5-phosphate synthase (624 aa).

Thiamine diphosphate-binding positions include histidine 80 and 121-123; that span reads GHS. A Mg(2+)-binding site is contributed by aspartate 152. Residues 153-154, asparagine 181, tyrosine 288, and glutamate 370 contribute to the thiamine diphosphate site; that span reads GA. A Mg(2+)-binding site is contributed by asparagine 181.

This sequence belongs to the transketolase family. DXPS subfamily. In terms of assembly, homodimer. The cofactor is Mg(2+). Thiamine diphosphate is required as a cofactor.

It catalyses the reaction D-glyceraldehyde 3-phosphate + pyruvate + H(+) = 1-deoxy-D-xylulose 5-phosphate + CO2. It functions in the pathway metabolic intermediate biosynthesis; 1-deoxy-D-xylulose 5-phosphate biosynthesis; 1-deoxy-D-xylulose 5-phosphate from D-glyceraldehyde 3-phosphate and pyruvate: step 1/1. Catalyzes the acyloin condensation reaction between C atoms 2 and 3 of pyruvate and glyceraldehyde 3-phosphate to yield 1-deoxy-D-xylulose-5-phosphate (DXP). The chain is 1-deoxy-D-xylulose-5-phosphate synthase from Proteus mirabilis (strain HI4320).